Consider the following 548-residue polypeptide: 5-epi-aristolochene synthase (548 aa).

Arg-264, Asp-301, Asp-305, Arg-441, and Asp-444 together coordinate (2E,6E)-farnesyl diphosphate. Residues Asp-301 and Asp-305 each contribute to the Mg(2+) site. Residues 301-305 (DDTFD) carry the DDXXD motif motif. Positions 444, 445, 448, and 452 each coordinate Mg(2+).

The protein belongs to the terpene synthase family. In terms of assembly, monomer. The cofactor is Mg(2+). In terms of processing, self-alkylated at Tyr-520 in the presence of (2Z,6E)-farnesyl diphosphate ((Z,E)-FPP). Self-alkylated at Asp-444 at warm temperature (42 degrees Celsius) in the presence of (2E,6E)-farnesyl diphosphate ((E,E)-FPP).

It is found in the cytoplasm. The enzyme catalyses (2E,6E)-farnesyl diphosphate = (+)-5-epi-aristolochene + diphosphate. The catalysed reaction is (2Z,6E)-farnesyl diphosphate = (+)-2-epi-prezizaene + diphosphate. It catalyses the reaction (2Z,6E)-farnesyl diphosphate = (-)-alpha-cedrene + diphosphate. It carries out the reaction (2Z,6E)-farnesyl diphosphate = (-)-beta-curcumene + diphosphate. It participates in secondary metabolite biosynthesis; terpenoid biosynthesis. Its activity is regulated as follows. Inhibited activity toward farnesyl diphosphate (FPP) by anilinogeranyl diphosphate (AGPP); AGPP undergoes a cyclization event leading to the formation of a novel macrocyclic paracyclophane alkaloid. Repressed by sesquilavandulyl diphosphate (SPP) via the induction of self-alkyation. In terms of biological role, catalyzes the cyclization of trans,trans-farnesyl diphosphate (FPP) to the bicyclic intermediate 5-epi-aristolochene, initial step in the conversion of FPP to the sesquiterpenoid antifungal phytoalexin capsidiol. Produces germacrene A as an enzyme-bound intermediate that is not released by the enzyme, but is further cyclized to produce the bicyclic 5-epi-aristolochene. Mediates, at low levels, the formation of 4-epi-eremophilene and premnaspirodiene from trans,trans-farnesyl diphosphate. Also mediates the conversion of cis,trans-farnesyl diphosphate to cisoid minor products such as (+)-2-epi-prezizaene, (-)-alpha-cedrene and, to a lesser extent, (-)-beta-curcumene; also produces, at low levels, alpha-acoradiene and 4-epi-alpha-acoradiene, but barely nerolidol, alpha-bisabolol, epi-alpha-bisabolol and cis-farnesol. This Nicotiana tabacum (Common tobacco) protein is 5-epi-aristolochene synthase (EAS3).